A 2176-amino-acid polypeptide reads, in one-letter code: Nipped-B-like protein scc-2 (2176 aa).

Residues 1–25 (MDPNNLQNSLNGTGNPNFQPVQTNA) show a composition bias toward polar residues. Disordered regions lie at residues 1-27 (MDPN…NAGG), 150-170 (PIPQ…QIQS), 464-483 (SEAT…DEEG), 495-514 (MMSV…NQRK), 523-551 (YDSL…DDED), 585-615 (QHFF…IESR), and 669-708 (DSLD…EMDE). The span at 464 to 473 (SEATQSSSVT) shows a compositional bias: low complexity. Composition is skewed to basic and acidic residues over residues 597-615 (EDRI…IESR) and 685-695 (SGGDHHHKGDE). The span at 696-708 (NSDESDEEEEMDE) shows a compositional bias: acidic residues. HEAT repeat units follow at residues 1280–1312 (DTYL…IIEA), 1320–1351 (EDVQ…FVLY), 1353–1388 (EEYV…ICEK), 1393–1426 (EMIP…LWFQ), 1692–1723 (EKVF…FCAQ), 1803–1834 (QKYW…TLNQ), and 1840–1871 (GASI…IDSK). The disordered stretch occupies residues 2149–2176 (ITAANDDYDEEEDGGEDSRGPIMEQMEH). Positions 2154–2163 (DDYDEEEDGG) are enriched in acidic residues.

Belongs to the SCC2/Nipped-B family. As to quaternary structure, may heterodimerize with mau-2/SCC4 to form the cohesin loading complex.

The protein resides in the nucleus. Its subcellular location is the chromosome. Functionally, plays an important role in the loading of the cohesin complex on to meiotic chromosomes. Forms a heterodimeric complex (also known as cohesin loading complex) with mau-2/SCC4 which mediates the loading of the cohesin complex onto chromatin. Plays an essential role in cell division during embryonic development. Promotes normal chromosome organization during meiosis. Required for the assembly of the synaptonemal complex between homologous chromosomes to promote sister chromatid cohesion during meiosis. Required for chromosome segregation during mitosis and meiosis. Plays a role in DNA double-strand break (DSB) repair during meiotic recombination and promotes the assembly of the 9-1-1 cell-cycle checkpoint response complex which is required for inducing apoptosis in response to DNA damage, at DNA damage sites. The sequence is that of Nipped-B-like protein scc-2 from Caenorhabditis elegans.